Consider the following 91-residue polypeptide: YcgL domain-containing protein ESA_01460 (91 aa).

Positions 1 to 85 (MFCVIYRSAR…PPENLLKQHL (85 aa)) constitute a YcgL domain.

This Cronobacter sakazakii (strain ATCC BAA-894) (Enterobacter sakazakii) protein is YcgL domain-containing protein ESA_01460.